The primary structure comprises 379 residues: Na(+)/H(+) antiporter NhaA (379 aa).

12 consecutive transmembrane segments (helical) span residues 14 to 34, 59 to 79, 95 to 115, 125 to 145, 154 to 174, 175 to 195, 200 to 220, 221 to 241, 261 to 281, 292 to 312, 328 to 348, and 359 to 379; these read AGGI…NTPL, LLMW…GMEV, VFPA…FLVF, GWAI…ALLG, IFLL…IALF, FSHD…AILI, LKIT…ASVL, KSGV…PLNG, FAIL…GMGM, IALG…FVAV, IFAV…LAGL, and VTAL…VLGY.

The protein belongs to the NhaA Na(+)/H(+) (TC 2.A.33) antiporter family.

It localises to the cell inner membrane. It carries out the reaction Na(+)(in) + 2 H(+)(out) = Na(+)(out) + 2 H(+)(in). Na(+)/H(+) antiporter that extrudes sodium in exchange for external protons. The chain is Na(+)/H(+) antiporter NhaA from Pasteurella multocida (strain Pm70).